Consider the following 474-residue polypeptide: ATP synthase subunit beta 2 (474 aa).

156-163 (GGAGVGKT) lines the ATP pocket.

It belongs to the ATPase alpha/beta chains family. F-type ATPases have 2 components, CF(1) - the catalytic core - and CF(0) - the membrane proton channel. CF(1) has five subunits: alpha(3), beta(3), gamma(1), delta(1), epsilon(1). CF(0) has three main subunits: a(1), b(2) and c(9-12). The alpha and beta chains form an alternating ring which encloses part of the gamma chain. CF(1) is attached to CF(0) by a central stalk formed by the gamma and epsilon chains, while a peripheral stalk is formed by the delta and b chains.

The protein localises to the cell inner membrane. It carries out the reaction ATP + H2O + 4 H(+)(in) = ADP + phosphate + 5 H(+)(out). In terms of biological role, produces ATP from ADP in the presence of a proton gradient across the membrane. The catalytic sites are hosted primarily by the beta subunits. This is ATP synthase subunit beta 2 from Shewanella frigidimarina (strain NCIMB 400).